Consider the following 622-residue polypeptide: 1,4-alpha-glucan branching enzyme GlgB (622 aa).

Asp-300 (nucleophile) is an active-site residue. Glu-351 functions as the Proton donor in the catalytic mechanism.

Belongs to the glycosyl hydrolase 13 family. GlgB subfamily. Monomer.

The catalysed reaction is Transfers a segment of a (1-&gt;4)-alpha-D-glucan chain to a primary hydroxy group in a similar glucan chain.. It participates in glycan biosynthesis; glycogen biosynthesis. Functionally, catalyzes the formation of the alpha-1,6-glucosidic linkages in glycogen by scission of a 1,4-alpha-linked oligosaccharide from growing alpha-1,4-glucan chains and the subsequent attachment of the oligosaccharide to the alpha-1,6 position. The protein is 1,4-alpha-glucan branching enzyme GlgB of Streptococcus agalactiae serotype V (strain ATCC BAA-611 / 2603 V/R).